A 284-amino-acid polypeptide reads, in one-letter code: MEMO1 family protein Mevan_0697 (284 aa).

It belongs to the MEMO1 family.

This chain is MEMO1 family protein Mevan_0697, found in Methanococcus vannielii (strain ATCC 35089 / DSM 1224 / JCM 13029 / OCM 148 / SB).